A 509-amino-acid polypeptide reads, in one-letter code: Heat shock 70 kDa protein 14 (509 aa).

The protein belongs to the heat shock protein 70 family. As to quaternary structure, component of ribosome-associated complex (RAC), a heterodimer composed of Hsp70/DnaK-type chaperone HSPA14 and Hsp40/DnaJ-type chaperone DNAJC2.

It localises to the cytoplasm. It is found in the cytosol. Its function is as follows. Component of the ribosome-associated complex (RAC), a complex involved in folding or maintaining nascent polypeptides in a folding-competent state. In the RAC complex, binds to the nascent polypeptide chain, while DNAJC2 stimulates its ATPase activity. In Pongo abelii (Sumatran orangutan), this protein is Heat shock 70 kDa protein 14 (HSPA14).